A 124-amino-acid polypeptide reads, in one-letter code: Small ribosomal subunit protein uS12 (124 aa).

The disordered stretch occupies residues 1-32; sequence MPTIQQLVRKGRQAKASKTKTPALKGSPQRRG. Residues 9 to 18 show a composition bias toward basic residues; that stretch reads RKGRQAKASK. Aspartate 89 carries the post-translational modification 3-methylthioaspartic acid.

The protein belongs to the universal ribosomal protein uS12 family. In terms of assembly, part of the 30S ribosomal subunit. Contacts proteins S8 and S17. May interact with IF1 in the 30S initiation complex.

Its function is as follows. With S4 and S5 plays an important role in translational accuracy. Interacts with and stabilizes bases of the 16S rRNA that are involved in tRNA selection in the A site and with the mRNA backbone. Located at the interface of the 30S and 50S subunits, it traverses the body of the 30S subunit contacting proteins on the other side and probably holding the rRNA structure together. The combined cluster of proteins S8, S12 and S17 appears to hold together the shoulder and platform of the 30S subunit. The polypeptide is Small ribosomal subunit protein uS12 (Acidothermus cellulolyticus (strain ATCC 43068 / DSM 8971 / 11B)).